Consider the following 790-residue polypeptide: Exocyst complex component SEC15A (790 aa).

The stretch at 49 to 70 (LVHQLKNVARKKEAEIEDLCKT) forms a coiled coil.

Belongs to the SEC15 family. The exocyst complex is composed of SEC3, SEC5, SEC6, SEC8, SEC10, EXO70A1 and EXO84B.

It is found in the cytoplasm. It localises to the cytosol. Functionally, component of the exocyst complex involved in the docking of exocytic vesicles with fusion sites on the plasma membrane during regulated or polarized secretion. Involved in polarized cell growth and organ morphogenesis. During cytokinesis, involved in cell plate initiation, cell plate maturation and formation of new primary cell wall. In Arabidopsis thaliana (Mouse-ear cress), this protein is Exocyst complex component SEC15A (SEC15A).